We begin with the raw amino-acid sequence, 108 residues long: uncharacterized protein (108 aa).

The span at 1–10 shows a compositional bias: basic and acidic residues; the sequence is MDMLHNKCSD. Positions 1–27 are disordered; sequence MDMLHNKCSDAIKSTSNSNLSNEVDKQ. Positions 12–22 are enriched in polar residues; the sequence is IKSTSNSNLSN.

This is an uncharacterized protein from Saccharomyces cerevisiae (strain ATCC 204508 / S288c) (Baker's yeast).